A 537-amino-acid chain; its full sequence is Copine-1 (537 aa).

C2 domains follow at residues 1–114 and 123–245; these read MAHC…TLPL and GRGT…ECIH. Ca(2+) is bound by residues Asp21, Asp27, Asp80, Asp82, Asp92, Asp153, and Asp159. Lys171 carries the N6-acetyllysine modification. Ca(2+) is bound by residues Asp214, Asp216, and Asp222. A VWFA domain is found at 285–505; it reads NFTVGVDFTG…ALAQTVLAEV (221 aa).

This sequence belongs to the copine family. In terms of assembly, homodimer; homodimerizes via its C2 domains. Interacts with p65/RELA (via N-terminus); this interaction induces proteolytic cleavage of p65/RELA subunit and inhibition of NF-kappa-B transcriptional activity. Interacts (via VWFA domain) with ACTB, CCDC22, MYCBP2, PPP5C, RDX and UBE2O. It depends on Ca(2+) as a cofactor. As to expression, expressed in liver, spleen, muscle, testis, adrenal (at protein level).

The protein localises to the nucleus. It localises to the cytoplasm. The protein resides in the cell membrane. Calcium-dependent phospholipid-binding protein that plays a role in calcium-mediated intracellular processes. Involved in the TNF-alpha receptor signaling pathway in a calcium-dependent manner. Exhibits calcium-dependent phospholipid binding properties. Plays a role in neuronal progenitor cell differentiation; induces neurite outgrowth via a AKT-dependent signaling cascade and calcium-independent manner. May recruit target proteins to the cell membrane in a calcium-dependent manner. May function in membrane trafficking. Involved in TNF-alpha-induced NF-kappa-B transcriptional repression by inducing endoprotease processing of the transcription factor NF-kappa-B p65/RELA subunit. Also induces endoprotease processing of NF-kappa-B p50/NFKB1, p52/NFKB2, RELB and REL. This is Copine-1 from Bos taurus (Bovine).